The following is a 258-amino-acid chain: Acyl-[acyl-carrier-protein]--UDP-N-acetylglucosamine O-acyltransferase (258 aa).

Belongs to the transferase hexapeptide repeat family. LpxA subfamily. As to quaternary structure, homotrimer.

The protein resides in the cytoplasm. The catalysed reaction is a (3R)-hydroxyacyl-[ACP] + UDP-N-acetyl-alpha-D-glucosamine = a UDP-3-O-[(3R)-3-hydroxyacyl]-N-acetyl-alpha-D-glucosamine + holo-[ACP]. It participates in glycolipid biosynthesis; lipid IV(A) biosynthesis; lipid IV(A) from (3R)-3-hydroxytetradecanoyl-[acyl-carrier-protein] and UDP-N-acetyl-alpha-D-glucosamine: step 1/6. Involved in the biosynthesis of lipid A, a phosphorylated glycolipid that anchors the lipopolysaccharide to the outer membrane of the cell. This Pseudomonas fluorescens (strain Pf0-1) protein is Acyl-[acyl-carrier-protein]--UDP-N-acetylglucosamine O-acyltransferase.